The following is an 873-amino-acid chain: Alanine--tRNA ligase (873 aa).

4 residues coordinate Zn(2+): H563, H567, C665, and H669.

This sequence belongs to the class-II aminoacyl-tRNA synthetase family. It depends on Zn(2+) as a cofactor.

The protein localises to the cytoplasm. It catalyses the reaction tRNA(Ala) + L-alanine + ATP = L-alanyl-tRNA(Ala) + AMP + diphosphate. In terms of biological role, catalyzes the attachment of alanine to tRNA(Ala) in a two-step reaction: alanine is first activated by ATP to form Ala-AMP and then transferred to the acceptor end of tRNA(Ala). Also edits incorrectly charged Ser-tRNA(Ala) and Gly-tRNA(Ala) via its editing domain. This Parabacteroides distasonis (strain ATCC 8503 / DSM 20701 / CIP 104284 / JCM 5825 / NCTC 11152) protein is Alanine--tRNA ligase.